Here is a 215-residue protein sequence, read N- to C-terminus: 3-isopropylmalate dehydratase small subunit (215 aa).

It belongs to the LeuD family. LeuD type 1 subfamily. Heterodimer of LeuC and LeuD.

The enzyme catalyses (2R,3S)-3-isopropylmalate = (2S)-2-isopropylmalate. It participates in amino-acid biosynthesis; L-leucine biosynthesis; L-leucine from 3-methyl-2-oxobutanoate: step 2/4. Its function is as follows. Catalyzes the isomerization between 2-isopropylmalate and 3-isopropylmalate, via the formation of 2-isopropylmaleate. The protein is 3-isopropylmalate dehydratase small subunit of Saccharophagus degradans (strain 2-40 / ATCC 43961 / DSM 17024).